The sequence spans 89 residues: Small ribosomal subunit protein uS15 (89 aa).

Belongs to the universal ribosomal protein uS15 family. Part of the 30S ribosomal subunit. Forms a bridge to the 50S subunit in the 70S ribosome, contacting the 23S rRNA.

One of the primary rRNA binding proteins, it binds directly to 16S rRNA where it helps nucleate assembly of the platform of the 30S subunit by binding and bridging several RNA helices of the 16S rRNA. Functionally, forms an intersubunit bridge (bridge B4) with the 23S rRNA of the 50S subunit in the ribosome. In Kocuria rhizophila (strain ATCC 9341 / DSM 348 / NBRC 103217 / DC2201), this protein is Small ribosomal subunit protein uS15.